Reading from the N-terminus, the 369-residue chain is UDP-N-acetylglucosamine--N-acetylmuramyl-(pentapeptide) pyrophosphoryl-undecaprenol N-acetylglucosamine transferase (369 aa).

Residues 10–12 (TAG), Asn124, Arg166, Ser196, Ile251, and Gln296 contribute to the UDP-N-acetyl-alpha-D-glucosamine site.

The protein belongs to the glycosyltransferase 28 family. MurG subfamily.

Its subcellular location is the cell membrane. It carries out the reaction di-trans,octa-cis-undecaprenyl diphospho-N-acetyl-alpha-D-muramoyl-L-alanyl-D-glutamyl-meso-2,6-diaminopimeloyl-D-alanyl-D-alanine + UDP-N-acetyl-alpha-D-glucosamine = di-trans,octa-cis-undecaprenyl diphospho-[N-acetyl-alpha-D-glucosaminyl-(1-&gt;4)]-N-acetyl-alpha-D-muramoyl-L-alanyl-D-glutamyl-meso-2,6-diaminopimeloyl-D-alanyl-D-alanine + UDP + H(+). It participates in cell wall biogenesis; peptidoglycan biosynthesis. Its function is as follows. Cell wall formation. Catalyzes the transfer of a GlcNAc subunit on undecaprenyl-pyrophosphoryl-MurNAc-pentapeptide (lipid intermediate I) to form undecaprenyl-pyrophosphoryl-MurNAc-(pentapeptide)GlcNAc (lipid intermediate II). In Acetivibrio thermocellus (strain ATCC 27405 / DSM 1237 / JCM 9322 / NBRC 103400 / NCIMB 10682 / NRRL B-4536 / VPI 7372) (Clostridium thermocellum), this protein is UDP-N-acetylglucosamine--N-acetylmuramyl-(pentapeptide) pyrophosphoryl-undecaprenol N-acetylglucosamine transferase.